A 532-amino-acid polypeptide reads, in one-letter code: tRNA-2-methylthio-N(6)-dimethylallyladenosine synthase (532 aa).

A disordered region spans residues 1–21 (MTSTVAHGAGSAGPADDVEPM). One can recognise an MTTase N-terminal domain in the interval 24 to 140 (RTYQVRTYGC…LPALLDRARH (117 aa)). [4Fe-4S] cluster is bound by residues cysteine 33, cysteine 69, cysteine 103, cysteine 177, cysteine 181, and cysteine 184. A Radical SAM core domain is found at 163-399 (RESAYAAWVS…VELQEQISLE (237 aa)). The region spanning 402-470 (RAIVGQRVEL…PHHLIADGGI (69 aa)) is the TRAM domain. The segment at 510-532 (TSCGSAGGCGSADGAGSSAGDPQ) is disordered. Positions 523–532 (GAGSSAGDPQ) are enriched in low complexity.

Belongs to the methylthiotransferase family. MiaB subfamily. As to quaternary structure, monomer. Requires [4Fe-4S] cluster as cofactor.

Its subcellular location is the cytoplasm. The catalysed reaction is N(6)-dimethylallyladenosine(37) in tRNA + (sulfur carrier)-SH + AH2 + 2 S-adenosyl-L-methionine = 2-methylsulfanyl-N(6)-dimethylallyladenosine(37) in tRNA + (sulfur carrier)-H + 5'-deoxyadenosine + L-methionine + A + S-adenosyl-L-homocysteine + 2 H(+). Catalyzes the methylthiolation of N6-(dimethylallyl)adenosine (i(6)A), leading to the formation of 2-methylthio-N6-(dimethylallyl)adenosine (ms(2)i(6)A) at position 37 in tRNAs that read codons beginning with uridine. This Mycobacterium ulcerans (strain Agy99) protein is tRNA-2-methylthio-N(6)-dimethylallyladenosine synthase.